The chain runs to 350 residues: Cilia- and flagella-associated protein 36 (350 aa).

Residues 142 to 167 (SELEQQEMKILQEVLRRSKEEYDLQM) are a coiled coil. Disordered regions lie at residues 171–233 (GLGS…ATTA) and 301–337 (RQTG…QKRK). Over residues 177 to 220 (LASTSSSVSETPQNPEQRLSNGVSDPLTLTQPDSEMEESSTATQ) the composition is skewed to polar residues. Positions 280–350 (VALQQRSEYL…EKLKEEVIKK (71 aa)) form a coiled coil.

This sequence belongs to the CFAP36 family.

It localises to the nucleus. Its subcellular location is the cytoplasm. The protein localises to the cell projection. The protein resides in the cilium. It is found in the flagellum. This is Cilia- and flagella-associated protein 36 from Danio rerio (Zebrafish).